The sequence spans 599 residues: Elongation factor 4 (599 aa).

One can recognise a tr-type G domain in the interval 5–187 (SHIRNFSIIA…RLVTTIPAPT (183 aa)). GTP is bound by residues 17–22 (DHGKST) and 134–137 (NKID).

This sequence belongs to the TRAFAC class translation factor GTPase superfamily. Classic translation factor GTPase family. LepA subfamily.

Its subcellular location is the cell inner membrane. It catalyses the reaction GTP + H2O = GDP + phosphate + H(+). Required for accurate and efficient protein synthesis under certain stress conditions. May act as a fidelity factor of the translation reaction, by catalyzing a one-codon backward translocation of tRNAs on improperly translocated ribosomes. Back-translocation proceeds from a post-translocation (POST) complex to a pre-translocation (PRE) complex, thus giving elongation factor G a second chance to translocate the tRNAs correctly. Binds to ribosomes in a GTP-dependent manner. The protein is Elongation factor 4 of Pseudomonas fluorescens (strain ATCC BAA-477 / NRRL B-23932 / Pf-5).